Consider the following 235-residue polypeptide: CMP-N,N'-diacetyllegionaminic acid synthase (235 aa).

Belongs to the CMP-NeuNAc synthase family.

It carries out the reaction N,N-diacetyllegionaminate + CTP = CMP-N,N-diacetyllegionaminate + diphosphate. In terms of biological role, involved in biosynthesis of legionaminic acid (5,7-diamino-3,5,7,9-tetradeoxy-D-glycero-D-galacto-non-2-ulosonic acid)(Leg), a sialic acid-like derivative that is incorporated into flagellin via O-linkage to Ser/Thr. Catalyzes the conversion of N,N'-diacetyllegionaminic acid (Leg5Ac7Ac) and CTP into CMP-N,N'-diacetyllegionaminic acid (CMP-Leg5Ac7Ac). This chain is CMP-N,N'-diacetyllegionaminic acid synthase (legF), found in Campylobacter jejuni subsp. jejuni serotype O:2 (strain ATCC 700819 / NCTC 11168).